The chain runs to 302 residues: MGDMSDLEVTCLQDYERYLHSERQLSAHTVHNYLYELNRVSTLLPKDVTLLNVGREHWQQVLAKLHRKGLSPRSLSLCLSAIKQWGEFLLREGMIAVNPAKGLSAPKQAKPLPKNMDVDSLTHLLEIEGTDPLTLRDKAMMELFYSSGLRLAELAALNLSSVQYDLREVRVLGKGNKERIVPVGSYAIKALEAWLVCRQQIPCEDCALFVTGKGRRLSHRSIQSRMAKWGQEQALSVRVHPHKLRHSFATHMLESSADLRAVQELLGHANLSTTQIYTSLDFQHLAKVYDSAHPRAKKQQDK.

One can recognise a Core-binding (CB) domain in the interval 6–90 (DLEVTCLQDY…AIKQWGEFLL (85 aa)). The Tyr recombinase domain maps to 111 to 290 (PLPKNMDVDS…DFQHLAKVYD (180 aa)). Residues Arg150, Lys174, His242, Arg245, and His268 contribute to the active site. Tyr277 functions as the O-(3'-phospho-DNA)-tyrosine intermediate in the catalytic mechanism.

It belongs to the 'phage' integrase family. XerC subfamily. As to quaternary structure, forms a cyclic heterotetrameric complex composed of two molecules of XerC and two molecules of XerD.

It is found in the cytoplasm. Its function is as follows. Site-specific tyrosine recombinase, which acts by catalyzing the cutting and rejoining of the recombining DNA molecules. The XerC-XerD complex is essential to convert dimers of the bacterial chromosome into monomers to permit their segregation at cell division. It also contributes to the segregational stability of plasmids. The sequence is that of Tyrosine recombinase XerC from Shewanella putrefaciens (strain CN-32 / ATCC BAA-453).